The sequence spans 466 residues: 55 kDa erythrocyte membrane protein (466 aa).

The residue at position 2 (Thr2) is an N-acetylthreonine. Phosphoserine occurs at positions 13 and 19. Thr49 bears the Phosphothreonine mark. Phosphoserine is present on residues Ser52, Ser57, and Ser110. Residues 71 to 152 enclose the PDZ domain; that stretch reads LIQFEKVTEE…MISLKVIPNQ (82 aa). Residues 158–228 enclose the SH3 domain; the sequence is ALQMFMRAQF…PSPELQEWRV (71 aa). Ser243 carries the post-translational modification Phosphoserine. Positions 268-466 are interaction with PALS1; sequence VVSYEEVVRL…PQWVPVSWVY (199 aa). Residues 282–451 form the Guanylate kinase-like domain; that stretch reads RKTLVLIGAS…TLKKLQEAFD (170 aa).

This sequence belongs to the MAGUK family. Heterodimer with PALS1. Interacts with DLG5 and NF2. Interacts (via guanylate kinase-like domain) with WHRN (via third PDZ domain). Post-translationally, palmitoylated.

Its subcellular location is the cell membrane. It localises to the cell projection. It is found in the stereocilium. Functionally, essential regulator of neutrophil polarity. Regulates neutrophil polarization by regulating AKT1 phosphorylation through a mechanism that is independent of PIK3CG activity. The sequence is that of 55 kDa erythrocyte membrane protein (MPP1) from Pongo abelii (Sumatran orangutan).